Reading from the N-terminus, the 335-residue chain is Tetraacyldisaccharide 4'-kinase (335 aa).

T59–T66 contacts ATP.

It belongs to the LpxK family.

It catalyses the reaction a lipid A disaccharide + ATP = a lipid IVA + ADP + H(+). Its pathway is glycolipid biosynthesis; lipid IV(A) biosynthesis; lipid IV(A) from (3R)-3-hydroxytetradecanoyl-[acyl-carrier-protein] and UDP-N-acetyl-alpha-D-glucosamine: step 6/6. Transfers the gamma-phosphate of ATP to the 4'-position of a tetraacyldisaccharide 1-phosphate intermediate (termed DS-1-P) to form tetraacyldisaccharide 1,4'-bis-phosphate (lipid IVA). In Aliivibrio salmonicida (strain LFI1238) (Vibrio salmonicida (strain LFI1238)), this protein is Tetraacyldisaccharide 4'-kinase.